The sequence spans 35 residues: Endochitinase 2 (35 aa).

Belongs to the glycosyl hydrolase 19 family. Chitinase class I subfamily.

It catalyses the reaction Random endo-hydrolysis of N-acetyl-beta-D-glucosaminide (1-&gt;4)-beta-linkages in chitin and chitodextrins.. In terms of biological role, defense against chitin-containing fungal pathogens. The polypeptide is Endochitinase 2 (Capsicum chinense (Scotch bonnet)).